A 632-amino-acid chain; its full sequence is ATP-dependent zinc metalloprotease FtsH (632 aa).

Residues 1–9 lie on the Cytoplasmic side of the membrane; sequence MKPTNEPKK. Residues 10 to 30 traverse the membrane as a helical segment; it reads PFFQSPIILAVLGGILLIFFL. At 31 to 116 the chain is on the periplasmic side; it reads RSFNSDGSFS…INYSGFSESN (86 aa). A helical transmembrane segment spans residues 117 to 137; sequence FFTDMLGWLMPILVILGLWMF. The Cytoplasmic segment spans residues 138–632; it reads MANRMQKNMG…RLIPLEEQAS (495 aa). Residues Ala173, 213 to 217, and His354 contribute to the ATP site; that span reads GTGKT. His434 provides a ligand contact to Zn(2+). The active site involves Glu435. Zn(2+) contacts are provided by His438 and Asp511.

It in the central section; belongs to the AAA ATPase family. This sequence in the C-terminal section; belongs to the peptidase M41 family. As to quaternary structure, homohexamer. The cofactor is Zn(2+).

The protein resides in the cell inner membrane. Functionally, acts as a processive, ATP-dependent zinc metallopeptidase for both cytoplasmic and membrane proteins. Plays a role in the quality control of integral membrane proteins. This is ATP-dependent zinc metalloprotease FtsH from Helicobacter pylori (strain ATCC 700392 / 26695) (Campylobacter pylori).